Consider the following 208-residue polypeptide: Ribosomal RNA large subunit methyltransferase E (208 aa).

S-adenosyl-L-methionine contacts are provided by Gly-63, Trp-65, Asp-83, Asp-99, and Asp-124. The active-site Proton acceptor is Lys-164.

This sequence belongs to the class I-like SAM-binding methyltransferase superfamily. RNA methyltransferase RlmE family.

The protein localises to the cytoplasm. It catalyses the reaction uridine(2552) in 23S rRNA + S-adenosyl-L-methionine = 2'-O-methyluridine(2552) in 23S rRNA + S-adenosyl-L-homocysteine + H(+). Its function is as follows. Specifically methylates the uridine in position 2552 of 23S rRNA at the 2'-O position of the ribose in the fully assembled 50S ribosomal subunit. This chain is Ribosomal RNA large subunit methyltransferase E, found in Salmonella paratyphi A (strain ATCC 9150 / SARB42).